The sequence spans 630 residues: Succinate dehydrogenase [ubiquinone] flavoprotein subunit, mitochondrial (630 aa).

Residues 1-31 (MWRGCVSRGLRSLSKGKGSSSSAPVSAAARL) constitute a mitochondrion transit peptide. FAD contacts are provided by residues 52–57 (GAGGAG), 75–90 (TKLF…AQGG), and aspartate 260. The residue at position 83 (histidine 83) is a Tele-8alpha-FAD histidine. The substrate site is built by histidine 281 and threonine 293. The active-site Proton acceptor is the arginine 325. Histidine 392 is a binding site for substrate. Position 426 (glutamate 426) interacts with FAD. Arginine 437 is a binding site for substrate. 442–443 (SL) contributes to the FAD binding site.

It belongs to the FAD-dependent oxidoreductase 2 family. FRD/SDH subfamily. In terms of assembly, component of complex II composed of eight subunits in plants: four classical SDH subunits SDH1, SDH2, SDH3 and SDH4 (a flavoprotein (FP), an iron-sulfur protein (IP), and a cytochrome b composed of a large and a small subunit.), as well as four subunits unknown in mitochondria from bacteria and heterotrophic eukaryotes. The cofactor is FAD.

It localises to the mitochondrion inner membrane. It catalyses the reaction a quinone + succinate = fumarate + a quinol. It functions in the pathway carbohydrate metabolism; tricarboxylic acid cycle; fumarate from succinate (eukaryal route): step 1/1. In terms of biological role, flavoprotein (FP) subunit of succinate dehydrogenase (SDH) that is involved in complex II of the mitochondrial electron transport chain and is responsible for transferring electrons from succinate to ubiquinone (coenzyme Q). The chain is Succinate dehydrogenase [ubiquinone] flavoprotein subunit, mitochondrial (SDH1) from Oryza sativa subsp. japonica (Rice).